Here is a 332-residue protein sequence, read N- to C-terminus: Protoheme IX farnesyltransferase (332 aa).

7 helical membrane passes run 63–83 (LICTLGGGALAAAAAGALNCL), 109–129 (TVFLGAVSCTFAAAMLLISGV), 132–152 (LAAGLTLLGLCSYVILYTIIL), 160–180 (IVFGGVAGAIPPLVGASAATG), 188–208 (WLFGLVMLWTPAHFWALAILL), 245–265 (ILGVFALPEGGLLYVIMLLPF), and 286–306 (AKGLFRWSILYMFGICLLLLI).

The protein belongs to the UbiA prenyltransferase family. Protoheme IX farnesyltransferase subfamily.

It is found in the cell inner membrane. The catalysed reaction is heme b + (2E,6E)-farnesyl diphosphate + H2O = Fe(II)-heme o + diphosphate. It functions in the pathway porphyrin-containing compound metabolism; heme O biosynthesis; heme O from protoheme: step 1/1. Functionally, converts heme B (protoheme IX) to heme O by substitution of the vinyl group on carbon 2 of heme B porphyrin ring with a hydroxyethyl farnesyl side group. This is Protoheme IX farnesyltransferase from Prochlorococcus marinus (strain MIT 9515).